The primary structure comprises 550 residues: Hydroxylamine reductase (550 aa).

Positions 3, 6, 18, and 25 each coordinate [2Fe-2S] cluster. Hybrid [4Fe-2O-2S] cluster-binding residues include His249, Glu273, Cys317, Cys405, Cys433, Cys458, Glu492, and Lys494. Residue Cys405 is modified to Cysteine persulfide.

Belongs to the HCP family. Requires [2Fe-2S] cluster as cofactor. The cofactor is hybrid [4Fe-2O-2S] cluster.

It localises to the cytoplasm. It carries out the reaction A + NH4(+) + H2O = hydroxylamine + AH2 + H(+). In terms of biological role, catalyzes the reduction of hydroxylamine to form NH(3) and H(2)O. The chain is Hydroxylamine reductase from Salmonella typhi.